The chain runs to 298 residues: GTPase Era (298 aa).

Positions 4 to 171 (KSGFVSIVGR…VEGIFELLPE (168 aa)) constitute an Era-type G domain. A G1 region spans residues 12–19 (GRPNVGKS). Residue 12–19 (GRPNVGKS) coordinates GTP. Positions 38 to 42 (QTTRN) are G2. The tract at residues 59 to 62 (DTPG) is G3. GTP contacts are provided by residues 59–63 (DTPGV) and 121–124 (NKID). Residues 121 to 124 (NKID) are G4. The tract at residues 150–152 (ISA) is G5. The region spanning 202–280 (TREEIPHSVA…YLDLWVKVKE (79 aa)) is the KH type-2 domain.

The protein belongs to the TRAFAC class TrmE-Era-EngA-EngB-Septin-like GTPase superfamily. Era GTPase family. Monomer.

It localises to the cytoplasm. It is found in the cell membrane. An essential GTPase that binds both GDP and GTP, with rapid nucleotide exchange. Plays a role in 16S rRNA processing and 30S ribosomal subunit biogenesis and possibly also in cell cycle regulation and energy metabolism. In Carboxydothermus hydrogenoformans (strain ATCC BAA-161 / DSM 6008 / Z-2901), this protein is GTPase Era.